We begin with the raw amino-acid sequence, 257 residues long: Exosome complex component Rrp4 (257 aa).

In terms of domain architecture, S1 motif spans 65–137 (GDNVLGKIVD…EVNQIDLTTK (73 aa)). Residues 147-206 (RGGQLVTITPSKVPRLIGKGGSMINMIKTLTGTRIIVGQNGWVWVSGKNDELERLAIEAI) form the KH domain.

Belongs to the RRP4 family. As to quaternary structure, component of the archaeal exosome complex. Forms a trimer of Rrp4 and/or Csl4 subunits. The trimer associates with a hexameric ring-like arrangement composed of 3 Rrp41-Rrp42 heterodimers.

It is found in the cytoplasm. Non-catalytic component of the exosome, which is a complex involved in RNA degradation. Increases the RNA binding and the efficiency of RNA degradation. Confers strong poly(A) specificity to the exosome. The protein is Exosome complex component Rrp4 of Thermococcus kodakarensis (strain ATCC BAA-918 / JCM 12380 / KOD1) (Pyrococcus kodakaraensis (strain KOD1)).